We begin with the raw amino-acid sequence, 98 residues long: Feather keratin 1 (98 aa).

This sequence belongs to the avian keratin family. The avian keratins (F-ker, S-ker, C-ker and B-ker) are a complex mixture of very similar polypeptides.

This chain is Feather keratin 1, found in Gallus gallus (Chicken).